A 342-amino-acid polypeptide reads, in one-letter code: BAG family molecular chaperone regulator 1 (342 aa).

Residues 1–41 (MMKMMRNKPTNLPTAGMTNGGRGSGGGGGGGGRESGGRDLE) are disordered. A compositionally biased stretch (polar residues) spans 8–17 (KPTNLPTAGM). Over residues 18–34 (TNGGRGSGGGGGGGGRE) the composition is skewed to gly residues. Positions 65-141 (PMIRVRIKYG…MVLIEDPLSQ (77 aa)) constitute a Ubiquitin-like domain. The region spanning 160-238 (AISDISLEVD…NYVETLDALK (79 aa)) is the BAG domain. The residue at position 298 (Ser-298) is a Phosphoserine.

As to quaternary structure, binds to the ATPase domain of HSP70/HSC70 chaperones.

Its function is as follows. Co-chaperone that regulates diverse cellular pathways, such as programmed cell death and stress responses. The polypeptide is BAG family molecular chaperone regulator 1 (BAG1) (Arabidopsis thaliana (Mouse-ear cress)).